Here is a 214-residue protein sequence, read N- to C-terminus: Large ribosomal subunit protein bL25 (214 aa).

Residues 178–214 are disordered; it reads VEPEEEELPETDEEGEGAEGEAAEAAEGESAEGESEE. Positions 179 to 214 are enriched in acidic residues; it reads EPEEEELPETDEEGEGAEGEAAEAAEGESAEGESEE.

Belongs to the bacterial ribosomal protein bL25 family. CTC subfamily. In terms of assembly, part of the 50S ribosomal subunit; part of the 5S rRNA/L5/L18/L25 subcomplex. Contacts the 5S rRNA. Binds to the 5S rRNA independently of L5 and L18.

In terms of biological role, this is one of the proteins that binds to the 5S RNA in the ribosome where it forms part of the central protuberance. This Corynebacterium jeikeium (strain K411) protein is Large ribosomal subunit protein bL25.